The following is a 365-amino-acid chain: Putative chalcone synthase (365 aa).

The active site involves C144.

Belongs to the thiolase-like superfamily. Chalcone/stilbene synthases family.

The enzyme catalyses (E)-4-coumaroyl-CoA + 3 malonyl-CoA + 3 H(+) = 2',4,4',6'-tetrahydroxychalcone + 3 CO2 + 4 CoA. The protein is Putative chalcone synthase (bcsA) of Bacillus subtilis (strain 168).